The sequence spans 203 residues: MIGRLRGIILEKQPPLVLLEVGGVGYEVHMPMTCFYELPESGKEATVFTHFVVREDAQLLYGFNNKQERTLFKELIKTNGVGPKLALAILSGMSAQQFVNAVEREEPAALVKLPGIGKKTAERLIVEMKDRFKGLHGDLFTPAADLVLTSPASPATDDAEQEAVAALVALGYKPQEASRMVSKIARPDASSETLIREALRAAL.

The domain I stretch occupies residues 1–64 (MIGRLRGIIL…EDAQLLYGFN (64 aa)). Residues 65–142 (NKQERTLFKE…KGLHGDLFTP (78 aa)) form a domain II region. Residues 143-154 (AADLVLTSPASP) form a flexible linker region. Residues 155–203 (ATDDAEQEAVAALVALGYKPQEASRMVSKIARPDASSETLIREALRAAL) are domain III.

It belongs to the RuvA family. Homotetramer. Forms an RuvA(8)-RuvB(12)-Holliday junction (HJ) complex. HJ DNA is sandwiched between 2 RuvA tetramers; dsDNA enters through RuvA and exits via RuvB. An RuvB hexamer assembles on each DNA strand where it exits the tetramer. Each RuvB hexamer is contacted by two RuvA subunits (via domain III) on 2 adjacent RuvB subunits; this complex drives branch migration. In the full resolvosome a probable DNA-RuvA(4)-RuvB(12)-RuvC(2) complex forms which resolves the HJ.

The protein resides in the cytoplasm. The RuvA-RuvB-RuvC complex processes Holliday junction (HJ) DNA during genetic recombination and DNA repair, while the RuvA-RuvB complex plays an important role in the rescue of blocked DNA replication forks via replication fork reversal (RFR). RuvA specifically binds to HJ cruciform DNA, conferring on it an open structure. The RuvB hexamer acts as an ATP-dependent pump, pulling dsDNA into and through the RuvAB complex. HJ branch migration allows RuvC to scan DNA until it finds its consensus sequence, where it cleaves and resolves the cruciform DNA. The sequence is that of Holliday junction branch migration complex subunit RuvA from Citrobacter koseri (strain ATCC BAA-895 / CDC 4225-83 / SGSC4696).